A 349-amino-acid chain; its full sequence is Microfibril-associated glycoprotein 3 (349 aa).

The signal sequence occupies residues 1-21 (MKLHHCLSFLLVVTLVPAALS). The Extracellular portion of the chain corresponds to 22-139 (LEDVAPLGAN…TLRVIFTSGD (118 aa)). Asn-31, Asn-36, Asn-63, and Asn-103 each carry an N-linked (GlcNAc...) asparagine glycan. One can recognise an Ig-like C2-type domain in the interval 41 to 130 (PSFELSAGSY…SPARASYSVT (90 aa)). Cysteines 68 and 117 form a disulfide. The helical transmembrane segment at 140 to 160 (MSVYYMVVCLIAFTITLILNV) threads the bilayer. Residues 161–349 (TRLCLMSTHL…EGSIHHRVSI (189 aa)) lie on the Cytoplasmic side of the membrane. Residues 280 to 349 (NPELGRSNSP…EGSIHHRVSI (70 aa)) form a disordered region. Positions 311-331 (VHLQSETKSIGTDSQDSSHFS) are enriched in polar residues.

Post-translationally, glycosylated.

The protein localises to the cell membrane. Functionally, component of the elastin-associated microfibrils. The chain is Microfibril-associated glycoprotein 3 (Mfap3) from Mus musculus (Mouse).